Here is a 295-residue protein sequence, read N- to C-terminus: uncharacterized protein (295 aa).

This is an uncharacterized protein from Rickettsia prowazekii (strain Madrid E).